The sequence spans 92 residues: Kinetoplastid membrane protein 11C (92 aa).

It belongs to the KMP-11 family. As to quaternary structure, monomer.

It localises to the cytoplasm. Its subcellular location is the cytoskeleton. It is found in the cell projection. The protein resides in the cilium. The protein localises to the flagellum. May be involved in the regulation of the cytoskeleton through interaction with the subpellicular microtubules. May be involved in parasite mobility and attachment to the surface of the host cell. Behaves as a strong immunogen during infection. In Leishmania infantum, this protein is Kinetoplastid membrane protein 11C (KMP-11C).